The primary structure comprises 377 residues: tRNA pseudouridine synthase B (377 aa).

The active-site Nucleophile is Asp53.

Belongs to the pseudouridine synthase TruB family. Type 1 subfamily.

It catalyses the reaction uridine(55) in tRNA = pseudouridine(55) in tRNA. Its function is as follows. Responsible for synthesis of pseudouridine from uracil-55 in the psi GC loop of transfer RNAs. The polypeptide is tRNA pseudouridine synthase B (Tropheryma whipplei (strain Twist) (Whipple's bacillus)).